The sequence spans 380 residues: Cytochrome b (380 aa).

4 helical membrane-spanning segments follow: residues 34-54, 78-99, 114-134, and 179-199; these read FGSL…LLAM, WLIR…YLHI, WNTG…GYVL, and FFAL…IHLT. Positions 84 and 98 each coordinate heme b. Heme b is bound by residues His-183 and His-197. His-202 contacts a ubiquinone. 4 helical membrane passes run 227-247, 289-309, 321-341, and 348-368; these read LKDI…ALFS, LGGV…PLLH, LSQL…WVGS, and FIII…ILLP.

The protein belongs to the cytochrome b family. As to quaternary structure, the cytochrome bc1 complex contains 11 subunits: 3 respiratory subunits (MT-CYB, CYC1 and UQCRFS1), 2 core proteins (UQCRC1 and UQCRC2) and 6 low-molecular weight proteins (UQCRH/QCR6, UQCRB/QCR7, UQCRQ/QCR8, UQCR10/QCR9, UQCR11/QCR10 and a cleavage product of UQCRFS1). This cytochrome bc1 complex then forms a dimer. Heme b serves as cofactor.

The protein localises to the mitochondrion inner membrane. Its function is as follows. Component of the ubiquinol-cytochrome c reductase complex (complex III or cytochrome b-c1 complex) that is part of the mitochondrial respiratory chain. The b-c1 complex mediates electron transfer from ubiquinol to cytochrome c. Contributes to the generation of a proton gradient across the mitochondrial membrane that is then used for ATP synthesis. The protein is Cytochrome b (MT-CYB) of Pelagodroma marina (White-faced storm-petrel).